Consider the following 451-residue polypeptide: COBRA-like protein 6 (451 aa).

Residues 1–21 form the signal peptide; it reads MAVLGSLLLLILAATLSVAVA. 8 N-linked (GlcNAc...) asparagine glycosylation sites follow: Asn-30, Asn-155, Asn-163, Asn-202, Asn-227, Asn-323, Asn-338, and Asn-357. Asn-426 carries the GPI-anchor amidated asparagine lipid modification. Residues 427–451 constitute a propeptide, removed in mature form; sequence AAPPAAASLVGSAVAMAALVFFLMA.

Belongs to the COBRA family.

It is found in the cell membrane. Its function is as follows. Involved in determining the orientation of cell expansion, probably by playing an important role in cellulose deposition. May act by recruiting cellulose synthesizing complexes to discrete positions on the cell surface. This chain is COBRA-like protein 6 (BC1L7), found in Oryza sativa subsp. japonica (Rice).